We begin with the raw amino-acid sequence, 163 residues long: MADARRAPLKDRTDVSGARALIVEARFYDDIQDALLEGAVAELSAAGVSYDVVTVPGALEIPAAIAIALDAAERSGKPYDAVVALGCVVRGDTIHFEIVSMESSRALMDLSVQRRVPLGNGIITVNTDAQAWARARASELNKGGDAARAALTMLRIKRRLAKA.

5-amino-6-(D-ribitylamino)uracil is bound by residues F27, 58–60 (ALE), and 87–89 (CVV). (2S)-2-hydroxy-3-oxobutyl phosphate is bound at residue 92 to 93 (DT). H95 serves as the catalytic Proton donor. N120 is a binding site for 5-amino-6-(D-ribitylamino)uracil. A (2S)-2-hydroxy-3-oxobutyl phosphate-binding site is contributed by R134.

It belongs to the DMRL synthase family.

It catalyses the reaction (2S)-2-hydroxy-3-oxobutyl phosphate + 5-amino-6-(D-ribitylamino)uracil = 6,7-dimethyl-8-(1-D-ribityl)lumazine + phosphate + 2 H2O + H(+). It functions in the pathway cofactor biosynthesis; riboflavin biosynthesis; riboflavin from 2-hydroxy-3-oxobutyl phosphate and 5-amino-6-(D-ribitylamino)uracil: step 1/2. Its function is as follows. Catalyzes the formation of 6,7-dimethyl-8-ribityllumazine by condensation of 5-amino-6-(D-ribitylamino)uracil with 3,4-dihydroxy-2-butanone 4-phosphate. This is the penultimate step in the biosynthesis of riboflavin. The polypeptide is 6,7-dimethyl-8-ribityllumazine synthase (Nitrobacter hamburgensis (strain DSM 10229 / NCIMB 13809 / X14)).